The primary structure comprises 190 residues: ATP synthase subunit delta (190 aa).

It belongs to the ATPase delta chain family. As to quaternary structure, F-type ATPases have 2 components, F(1) - the catalytic core - and F(0) - the membrane proton channel. F(1) has five subunits: alpha(3), beta(3), gamma(1), delta(1), epsilon(1). F(0) has three main subunits: a(1), b(2) and c(10-14). The alpha and beta chains form an alternating ring which encloses part of the gamma chain. F(1) is attached to F(0) by a central stalk formed by the gamma and epsilon chains, while a peripheral stalk is formed by the delta and b chains.

The protein resides in the cell inner membrane. Functionally, f(1)F(0) ATP synthase produces ATP from ADP in the presence of a proton or sodium gradient. F-type ATPases consist of two structural domains, F(1) containing the extramembraneous catalytic core and F(0) containing the membrane proton channel, linked together by a central stalk and a peripheral stalk. During catalysis, ATP synthesis in the catalytic domain of F(1) is coupled via a rotary mechanism of the central stalk subunits to proton translocation. Its function is as follows. This protein is part of the stalk that links CF(0) to CF(1). It either transmits conformational changes from CF(0) to CF(1) or is implicated in proton conduction. The chain is ATP synthase subunit delta from Beijerinckia indica subsp. indica (strain ATCC 9039 / DSM 1715 / NCIMB 8712).